A 231-amino-acid chain; its full sequence is Ureidoacrylate amidohydrolase RutB (231 aa).

The Proton acceptor role is filled by Asp25. Lys134 is a catalytic residue. Cys167 acts as the Nucleophile in catalysis.

Belongs to the isochorismatase family. RutB subfamily.

The enzyme catalyses (Z)-3-ureidoacrylate + H2O + H(+) = (Z)-3-aminoacrylate + NH4(+) + CO2. The catalysed reaction is (Z)-3-ureidoacrylate + H2O = (Z)-3-aminoacrylate + carbamate + H(+). It catalyses the reaction (Z)-2-methylureidoacrylate + H2O + H(+) = (Z)-2-methylaminoacrylate + NH4(+) + CO2. Functionally, hydrolyzes ureidoacrylate to form aminoacrylate and carbamate. The carbamate hydrolyzes spontaneously, thereby releasing one of the nitrogen atoms of the pyrimidine ring as ammonia and one of its carbon atoms as CO2. The protein is Ureidoacrylate amidohydrolase RutB of Escherichia coli O139:H28 (strain E24377A / ETEC).